The primary structure comprises 410 residues: Extracellular serine proteinase (410 aa).

Positions 1 to 19 (MKRGGLWLLLGLLVLSACS) are cleaved as a signal peptide. A propeptide spanning residues 20 to 132 (SNPPAASTQE…IEADQEVRAF (113 aa)) is cleaved from the precursor. Positions 45-130 (YIVVYKENAD…AYIEADQEVR (86 aa)) constitute an Inhibitor I9 domain. A Peptidase S8 domain is found at 139–410 (TWGLDRIDQR…SPNLLLYTPF (272 aa)). Active-site charge relay system residues include aspartate 171, histidine 204, and serine 356.

The protein belongs to the peptidase S8 family. Contains 4 Cys residues that form two disulfide bonds. In terms of processing, glycosylated. This proteinase has a 0.7% carbohydrate content.

Its subcellular location is the secreted. Functionally, serine proteinase with preferred activity for amino acids with aromatic side groups at the P1' side of the scissible bond. This is Extracellular serine proteinase from Thermus sp. (strain Rt41A).